Here is a 71-residue protein sequence, read N- to C-terminus: Ranatuerin-2PLa (71 aa).

The N-terminal stretch at 1 to 22 (MFTTKKSMLLFFFLGTISLSLC) is a signal peptide. Residues 23–41 (EQERGADEDDGVEMTEEEV) constitute a propeptide that is removed on maturation. C66 and C71 are oxidised to a cystine.

Expressed by the skin glands.

The protein resides in the secreted. Its function is as follows. May have antimicrobial activity against the Gram-negative bacterium E.coli. The polypeptide is Ranatuerin-2PLa (Lithobates palustris (Pickerel frog)).